A 424-amino-acid chain; its full sequence is Protein ImpB (424 aa).

Positions 2-189 constitute a UmuC domain; sequence FALADINSFY…QPVGEVWGVG (188 aa).

This sequence belongs to the DNA polymerase type-Y family.

Involved in UV protection and mutation. The protein is Protein ImpB (impB) of Salmonella typhimurium.